Consider the following 38-residue polypeptide: Photosystem II reaction center protein L (38 aa).

A helical transmembrane segment spans residues 17–37 (SLYWGLLLIFVLAVPFSNYFF).

This sequence belongs to the PsbL family. In terms of assembly, PSII is composed of 1 copy each of membrane proteins PsbA, PsbB, PsbC, PsbD, PsbE, PsbF, PsbH, PsbI, PsbJ, PsbK, PsbL, PsbM, PsbT, PsbX, PsbY, PsbZ, Psb30/Ycf12, at least 3 peripheral proteins of the oxygen-evolving complex and a large number of cofactors. It forms dimeric complexes.

The protein resides in the plastid. It localises to the chloroplast thylakoid membrane. One of the components of the core complex of photosystem II (PSII). PSII is a light-driven water:plastoquinone oxidoreductase that uses light energy to abstract electrons from H(2)O, generating O(2) and a proton gradient subsequently used for ATP formation. It consists of a core antenna complex that captures photons, and an electron transfer chain that converts photonic excitation into a charge separation. This subunit is found at the monomer-monomer interface and is required for correct PSII assembly and/or dimerization. The sequence is that of Photosystem II reaction center protein L from Cedrus deodara (Deodar cedar).